The following is a 408-amino-acid chain: NADH-quinone oxidoreductase subunit D (408 aa).

The protein belongs to the complex I 49 kDa subunit family. NDH-1 is composed of 14 different subunits. Subunits NuoB, C, D, E, F, and G constitute the peripheral sector of the complex.

The protein resides in the cell inner membrane. It catalyses the reaction a quinone + NADH + 5 H(+)(in) = a quinol + NAD(+) + 4 H(+)(out). NDH-1 shuttles electrons from NADH, via FMN and iron-sulfur (Fe-S) centers, to quinones in the respiratory chain. The immediate electron acceptor for the enzyme in this species is believed to be ubiquinone. Couples the redox reaction to proton translocation (for every two electrons transferred, four hydrogen ions are translocated across the cytoplasmic membrane), and thus conserves the redox energy in a proton gradient. The protein is NADH-quinone oxidoreductase subunit D of Wolinella succinogenes (strain ATCC 29543 / DSM 1740 / CCUG 13145 / JCM 31913 / LMG 7466 / NCTC 11488 / FDC 602W) (Vibrio succinogenes).